The chain runs to 464 residues: Hydrogen cyanide synthase subunit HcnB (464 aa).

Heterotrimer of HcnA, HcnB and HcnC.

The protein resides in the cell membrane. The catalysed reaction is glycine + 2 A = hydrogen cyanide + 2 AH2 + CO2. With respect to regulation, oxygen is necessary for cyanogenesis. Activated by succinate, glycine methyl ester, glucose and D,L-methionine in addition to glycine. Phenazine methosulfate, methylene blue, 2,6-dichlorophenolindophenol (DCIP) and ferricyanide can replace oxygen for the reaction. Inhibited by pyrrolnitrin and acriflavine at 1 mM concentration. Functionally, a three-component membrane-bound flavoenzyme that catalyzes the formation of hydrogen cyanide, a secondary metabolite, by transfer of electrons to a cyanide-resistant branch of the aerobic respiratory chain. This is Hydrogen cyanide synthase subunit HcnB from Pseudomonas aeruginosa (strain ATCC 15692 / DSM 22644 / CIP 104116 / JCM 14847 / LMG 12228 / 1C / PRS 101 / PAO1).